Consider the following 545-residue polypeptide: Glucose-6-phosphate isomerase (545 aa).

The active-site Proton donor is glutamate 351. Residues histidine 382 and lysine 510 contribute to the active site.

This sequence belongs to the GPI family.

The protein localises to the cytoplasm. The enzyme catalyses alpha-D-glucose 6-phosphate = beta-D-fructose 6-phosphate. The protein operates within carbohydrate biosynthesis; gluconeogenesis. Its pathway is carbohydrate degradation; glycolysis; D-glyceraldehyde 3-phosphate and glycerone phosphate from D-glucose: step 2/4. Catalyzes the reversible isomerization of glucose-6-phosphate to fructose-6-phosphate. The chain is Glucose-6-phosphate isomerase from Shewanella baltica (strain OS155 / ATCC BAA-1091).